Here is a 466-residue protein sequence, read N- to C-terminus: Uronate isomerase (466 aa).

It belongs to the metallo-dependent hydrolases superfamily. Uronate isomerase family.

The catalysed reaction is D-glucuronate = D-fructuronate. The enzyme catalyses aldehydo-D-galacturonate = keto-D-tagaturonate. It functions in the pathway carbohydrate metabolism; pentose and glucuronate interconversion. The chain is Uronate isomerase from Streptococcus agalactiae serotype V (strain ATCC BAA-611 / 2603 V/R).